The following is a 171-amino-acid chain: Tetratricopeptide repeat protein 9C (171 aa).

3 TPR repeats span residues 8–41 (AQLYKEEGNQRYREGKYRDAVSRYHRALLQLRGL), 72–107 (TDCYNNLAACLLQMEPVNYERVREYSQKVLERQPDN), and 108–141 (AKALYRAGVAFFHLQDYDQARHYLLAAVNRQPKD).

The protein belongs to the TTC9 family.

The protein is Tetratricopeptide repeat protein 9C (TTC9C) of Homo sapiens (Human).